We begin with the raw amino-acid sequence, 1373 residues long: DNA-directed RNA polymerase subunit beta'' (1373 aa).

Residues cysteine 220, cysteine 291, cysteine 298, and cysteine 301 each contribute to the Zn(2+) site.

Belongs to the RNA polymerase beta' chain family. RpoC2 subfamily. As to quaternary structure, in plastids the minimal PEP RNA polymerase catalytic core is composed of four subunits: alpha, beta, beta', and beta''. When a (nuclear-encoded) sigma factor is associated with the core the holoenzyme is formed, which can initiate transcription. Requires Zn(2+) as cofactor.

It localises to the plastid. The protein localises to the chloroplast. It carries out the reaction RNA(n) + a ribonucleoside 5'-triphosphate = RNA(n+1) + diphosphate. In terms of biological role, DNA-dependent RNA polymerase catalyzes the transcription of DNA into RNA using the four ribonucleoside triphosphates as substrates. The sequence is that of DNA-directed RNA polymerase subunit beta'' from Silene latifolia (White campion).